The sequence spans 1058 residues: Carbamoyl phosphate synthase large chain (1058 aa).

The tract at residues 1-401 (MPKRKDIKTI…SLLKAIRSLE (401 aa)) is carboxyphosphate synthetic domain. Arg129, Arg169, Gly175, Gly176, Lys208, Ile210, Glu215, Gly241, Ile242, His243, Gln284, and Glu298 together coordinate ATP. The region spanning 133–327 (RDLMNELNEP…IAKIAAKIAV (195 aa)) is the ATP-grasp 1 domain. Mg(2+) contacts are provided by Gln284, Glu298, and Asn300. Residues Gln284, Glu298, and Asn300 each coordinate Mn(2+). The tract at residues 402 to 546 (YGVHHLGLPN…YSTYEFENES (145 aa)) is oligomerization domain. A carbamoyl phosphate synthetic domain region spans residues 547–929 (TRSDKEKIVV…ALYKGLTAAG (383 aa)). An ATP-grasp 2 domain is found at 671–861 (EKLLIGLKIP…VANIAMQCIL (191 aa)). Residues Arg707, Arg746, Leu748, Glu752, Gly777, Val778, His779, Ser780, Gln820, and Glu832 each coordinate ATP. 3 residues coordinate Mg(2+): Gln820, Glu832, and Asn834. Mn(2+) contacts are provided by Gln820, Glu832, and Asn834. The MGS-like domain occupies 930-1058 (IKIKDYGRVL…ESMSFRVQTL (129 aa)). Positions 930–1058 (IKIKDYGRVL…ESMSFRVQTL (129 aa)) are allosteric domain.

The protein belongs to the CarB family. As to quaternary structure, composed of two chains; the small (or glutamine) chain promotes the hydrolysis of glutamine to ammonia, which is used by the large (or ammonia) chain to synthesize carbamoyl phosphate. Tetramer of heterodimers (alpha,beta)4. Requires Mg(2+) as cofactor. The cofactor is Mn(2+).

It catalyses the reaction hydrogencarbonate + L-glutamine + 2 ATP + H2O = carbamoyl phosphate + L-glutamate + 2 ADP + phosphate + 2 H(+). The enzyme catalyses hydrogencarbonate + NH4(+) + 2 ATP = carbamoyl phosphate + 2 ADP + phosphate + 2 H(+). Its pathway is amino-acid biosynthesis; L-arginine biosynthesis; carbamoyl phosphate from bicarbonate: step 1/1. It participates in pyrimidine metabolism; UMP biosynthesis via de novo pathway; (S)-dihydroorotate from bicarbonate: step 1/3. Functionally, large subunit of the glutamine-dependent carbamoyl phosphate synthetase (CPSase). CPSase catalyzes the formation of carbamoyl phosphate from the ammonia moiety of glutamine, carbonate, and phosphate donated by ATP, constituting the first step of 2 biosynthetic pathways, one leading to arginine and/or urea and the other to pyrimidine nucleotides. The large subunit (synthetase) binds the substrates ammonia (free or transferred from glutamine from the small subunit), hydrogencarbonate and ATP and carries out an ATP-coupled ligase reaction, activating hydrogencarbonate by forming carboxy phosphate which reacts with ammonia to form carbamoyl phosphate. The polypeptide is Carbamoyl phosphate synthase large chain (Fusobacterium nucleatum subsp. nucleatum (strain ATCC 25586 / DSM 15643 / BCRC 10681 / CIP 101130 / JCM 8532 / KCTC 2640 / LMG 13131 / VPI 4355)).